We begin with the raw amino-acid sequence, 553 residues long: Protein DA1-related 1 (553 aa).

The segment at 10 to 41 is disordered; the sequence is GSSHKFSDGQCNGRYREDRNLEGPRYSAEGSD. The 20-residue stretch at 42–61 folds into the UIM 1 domain; sequence FDKEEIECAIALSLSEQEHV. Basic and acidic residues predominate over residues 62–77; sequence IPQDDKGKKIIEYKSE. The tract at residues 62-91 is disordered; the sequence is IPQDDKGKKIIEYKSETEEDDDDDEDEDEE. The span at 78–91 shows a compositional bias: acidic residues; that stretch reads TEEDDDDDEDEDEE. The region spanning 87–106 is the UIM 2 domain; the sequence is DEDEEYMRAQLEAAEEEERR. In terms of domain architecture, UIM 3; degenerate spans 122–141; the sequence is AQLEETEKLLAKARLEEEEM. Residues 149–168 form the UIM 4 domain; that stretch reads EEDELLAKALQESMNVGSPP. Serine 166 is modified (phosphoserine). The LIM zinc-binding domain maps to 188–248; it reads RICVGCQAEI…KLCYKEQHHP (61 aa).

Interacts with ubiquitin, TCP14 and TCP15. Post-translationally, polyubiquitinated by DA2.

Functionally, acts redundantly with DA1 and DAR2 to regulate endoreduplication during leaf development. Together with DA1 and DAR2, modulates the protein stability of the transcription factors TCP14 and TCP15, which repress endoreduplication by directly regulating the expression of cell-cycle genes. This chain is Protein DA1-related 1, found in Arabidopsis thaliana (Mouse-ear cress).